The chain runs to 210 residues: Uridine kinase (210 aa).

Gly13–Thr20 is a binding site for ATP.

Belongs to the uridine kinase family.

It localises to the cytoplasm. The catalysed reaction is uridine + ATP = UMP + ADP + H(+). The enzyme catalyses cytidine + ATP = CMP + ADP + H(+). Its pathway is pyrimidine metabolism; CTP biosynthesis via salvage pathway; CTP from cytidine: step 1/3. It functions in the pathway pyrimidine metabolism; UMP biosynthesis via salvage pathway; UMP from uridine: step 1/1. The polypeptide is Uridine kinase (Oceanobacillus iheyensis (strain DSM 14371 / CIP 107618 / JCM 11309 / KCTC 3954 / HTE831)).